The following is a 94-amino-acid chain: Phosphoribosyl-ATP pyrophosphatase (94 aa).

The protein belongs to the PRA-PH family.

It is found in the cytoplasm. The catalysed reaction is 1-(5-phospho-beta-D-ribosyl)-ATP + H2O = 1-(5-phospho-beta-D-ribosyl)-5'-AMP + diphosphate + H(+). It participates in amino-acid biosynthesis; L-histidine biosynthesis; L-histidine from 5-phospho-alpha-D-ribose 1-diphosphate: step 2/9. The sequence is that of Phosphoribosyl-ATP pyrophosphatase from Pyrobaculum islandicum (strain DSM 4184 / JCM 9189 / GEO3).